A 408-amino-acid chain; its full sequence is Zinc finger and SCAN domain-containing protein 1 (408 aa).

The interval 1–34 (MLPRPKAPASPRRPQTPTPSEQDADPGPASPRDT) is disordered. The SCAN box domain maps to 38–120 (RLRFRQFQYH…SLVEDLTQMC (83 aa)). Disordered regions lie at residues 136–155 (WSFG…EPSQ), 177–203 (LETT…LLGS), and 215–273 (DEPE…GGTQ). A compositionally biased stretch (polar residues) spans 177-187 (LETTQLQQSLH). 2 C2H2-type zinc fingers span residues 292 to 314 (FQCA…QKTH) and 320 to 342 (FPCP…GKIH). The segment at 344 to 379 (LEPPRKKAPRSKGPRESVPPRDGAQGPVAPRSPKRP) is disordered. The C2H2-type 3 zinc-finger motif lies at 380 to 402 (FQCSVCGKAFPWMVHLIDHQKLH).

The protein localises to the nucleus. May be involved in transcriptional regulation. The protein is Zinc finger and SCAN domain-containing protein 1 (ZSCAN1) of Homo sapiens (Human).